The primary structure comprises 199 residues: Inner membrane protein E199L (199 aa).

A helical transmembrane segment spans residues I150–I170.

The protein belongs to the asfivirus E199L family. As to quaternary structure, interacts with host PYCR2; this interaction results in autophagy activation. Contains intramolecular disulfide bonds.

Its subcellular location is the virion membrane. It is found in the host membrane. Its function is as follows. Essential for viral fusion with host endosomal membrane and core release. Not required for virus morphogenesis and egress. Induces complete autophagy through the interaction with and down-regulation of host PYCR2. The polypeptide is Inner membrane protein E199L (Ornithodoros (relapsing fever ticks)).